The following is a 340-amino-acid chain: Putative pyridoxal kinase C18.10 (340 aa).

Positions 19 and 130 each coordinate substrate. Residues T189–S190 and Q218–G230 each bind ATP. Residue D231 participates in substrate binding.

The protein belongs to the pyridoxine kinase family. It depends on a divalent metal cation as a cofactor.

It localises to the cytoplasm. The protein localises to the nucleus. The catalysed reaction is pyridoxal + ATP = pyridoxal 5'-phosphate + ADP + H(+). Required for synthesis of pyridoxal-5-phosphate from vitamin B6. The polypeptide is Putative pyridoxal kinase C18.10 (Schizosaccharomyces pombe (strain 972 / ATCC 24843) (Fission yeast)).